Here is a 119-residue protein sequence, read N- to C-terminus: Protein Wnt-4 (119 aa).

S1 carries O-palmitoleoyl serine; by PORCN lipidation. 2 cysteine pairs are disulfide-bonded: C69-C100 and C85-C95. N86 carries an N-linked (GlcNAc...) asparagine glycan.

The protein belongs to the Wnt family. Post-translationally, palmitoleoylation is required for efficient binding to frizzled receptors. Depalmitoleoylation leads to Wnt signaling pathway inhibition.

It localises to the secreted. The protein localises to the extracellular space. The protein resides in the extracellular matrix. Its function is as follows. Ligand for members of the frizzled family of seven transmembrane receptors. Plays an important role in embryonic development. This Meleagris gallopavo (Wild turkey) protein is Protein Wnt-4 (WNT4).